Here is a 62-residue protein sequence, read N- to C-terminus: Conotoxin Im5.1 (62 aa).

An N-terminal signal peptide occupies residues 1-19; sequence MYCLPVFIILLLLISSAPS. A propeptide spanning residues 20–48 is cleaved from the precursor; sequence TPPQPRNKDRVHLISLLDNHKQILQRDWN. Position 60 is a tryptophan amide (W60).

It belongs to the conotoxin T superfamily. Post-translationally, contains 2 disulfide bonds that can be either 'C1-C3, C2-C4' or 'C1-C4, C2-C3', since these disulfide connectivities have been observed for conotoxins with cysteine framework V (for examples, see AC P0DQQ7 and AC P81755). As to expression, expressed by the venom duct.

Its subcellular location is the secreted. In Conus imperialis (Imperial cone), this protein is Conotoxin Im5.1.